A 492-amino-acid chain; its full sequence is N-succinylglutamate 5-semialdehyde dehydrogenase (492 aa).

220–225 (GRANTG) serves as a coordination point for NAD(+). Active-site residues include glutamate 243 and cysteine 277.

Belongs to the aldehyde dehydrogenase family. AstD subfamily.

The enzyme catalyses N-succinyl-L-glutamate 5-semialdehyde + NAD(+) + H2O = N-succinyl-L-glutamate + NADH + 2 H(+). It participates in amino-acid degradation; L-arginine degradation via AST pathway; L-glutamate and succinate from L-arginine: step 4/5. Catalyzes the NAD-dependent reduction of succinylglutamate semialdehyde into succinylglutamate. This Shigella boydii serotype 4 (strain Sb227) protein is N-succinylglutamate 5-semialdehyde dehydrogenase.